Reading from the N-terminus, the 197-residue chain is Imidazoleglycerol-phosphate dehydratase (197 aa).

It belongs to the imidazoleglycerol-phosphate dehydratase family.

It is found in the cytoplasm. It carries out the reaction D-erythro-1-(imidazol-4-yl)glycerol 3-phosphate = 3-(imidazol-4-yl)-2-oxopropyl phosphate + H2O. The protein operates within amino-acid biosynthesis; L-histidine biosynthesis; L-histidine from 5-phospho-alpha-D-ribose 1-diphosphate: step 6/9. This is Imidazoleglycerol-phosphate dehydratase from Xanthobacter autotrophicus (strain ATCC BAA-1158 / Py2).